A 189-amino-acid polypeptide reads, in one-letter code: Transcriptional repressor NrdR (189 aa).

The segment at 3–34 is a zinc-finger region; it reads CPFCRGDDSRVVDSREVEDGQAIRRRRSCSGC. Positions 46 to 136 constitute an ATP-cone domain; it reads LSVVKRSGVT…VYRAFSSVED (91 aa). The tract at residues 152 to 189 is disordered; sequence RLPEGPEAAQGGPESKAGNGQAAGSGDPEGVKAEKSSE. Residues 180–189 show a composition bias toward basic and acidic residues; that stretch reads EGVKAEKSSE.

It belongs to the NrdR family. The cofactor is Zn(2+).

Functionally, negatively regulates transcription of bacterial ribonucleotide reductase nrd genes and operons by binding to NrdR-boxes. This Saccharopolyspora erythraea (strain ATCC 11635 / DSM 40517 / JCM 4748 / NBRC 13426 / NCIMB 8594 / NRRL 2338) protein is Transcriptional repressor NrdR.